Consider the following 105-residue polypeptide: Integration host factor subunit alpha (105 aa).

Belongs to the bacterial histone-like protein family. In terms of assembly, heterodimer of an alpha and a beta chain.

In terms of biological role, this protein is one of the two subunits of integration host factor, a specific DNA-binding protein that functions in genetic recombination as well as in transcriptional and translational control. The chain is Integration host factor subunit alpha from Azorhizobium caulinodans (strain ATCC 43989 / DSM 5975 / JCM 20966 / LMG 6465 / NBRC 14845 / NCIMB 13405 / ORS 571).